The primary structure comprises 119 residues: Large ribosomal subunit protein uL18 (119 aa).

Belongs to the universal ribosomal protein uL18 family. As to quaternary structure, part of the 50S ribosomal subunit; part of the 5S rRNA/L5/L18/L25 subcomplex. Contacts the 5S and 23S rRNAs.

This is one of the proteins that bind and probably mediate the attachment of the 5S RNA into the large ribosomal subunit, where it forms part of the central protuberance. In Jannaschia sp. (strain CCS1), this protein is Large ribosomal subunit protein uL18.